The sequence spans 415 residues: S-inosyl-L-homocysteine hydrolase (415 aa).

2 residues coordinate substrate: D123 and E148. 149–151 serves as a coordination point for NAD(+); it reads TTT. Residues K178 and D182 each contribute to the substrate site. NAD(+) contacts are provided by residues N183, 212–217, E235, 291–293, and N337; these read GYGWCG and AGH.

The protein belongs to the adenosylhomocysteinase family. Exists both as a homotetramer and a homodimer, in a 4:1 ratio. It depends on NAD(+) as a cofactor.

It is found in the cytoplasm. It carries out the reaction S-inosyl-L-homocysteine + H2O = L-homocysteine + inosine. The protein operates within amino-acid biosynthesis; S-adenosyl-L-methionine biosynthesis. Catalyzes the hydrolysis of S-inosyl-L-homocysteine (SIH) to L-homocysteine (Hcy) and inosine. Likely functions in a S-adenosyl-L-methionine (SAM) recycling pathway from S-adenosyl-L-homocysteine (SAH) produced from SAM-dependent methylation reactions. Can also catalyze the reverse reaction in vitro, i.e. the synthesis of SIH from Hcy and inosine. Is specific for SIH and inosine as it is unable to either hydrolyze SAH or synthesize SAH from adenosine and Hcy. This chain is S-inosyl-L-homocysteine hydrolase, found in Methanocaldococcus jannaschii (strain ATCC 43067 / DSM 2661 / JAL-1 / JCM 10045 / NBRC 100440) (Methanococcus jannaschii).